A 188-amino-acid polypeptide reads, in one-letter code: Probable manganese efflux pump MntP (188 aa).

The next 5 helical transmembrane spans lie at isoleucine 3–glycine 23, leucine 66–isoleucine 86, tryptophan 106–phenylalanine 128, alanine 143–glycine 163, and isoleucine 168–glycine 188.

The protein belongs to the MntP (TC 9.B.29) family.

Its subcellular location is the cell inner membrane. Functionally, probably functions as a manganese efflux pump. The sequence is that of Probable manganese efflux pump MntP from Escherichia coli O139:H28 (strain E24377A / ETEC).